Consider the following 149-residue polypeptide: Arginine repressor (149 aa).

It belongs to the ArgR family.

The protein localises to the cytoplasm. Its pathway is amino-acid biosynthesis; L-arginine biosynthesis [regulation]. In terms of biological role, regulates arginine biosynthesis genes. This chain is Arginine repressor, found in Listeria welshimeri serovar 6b (strain ATCC 35897 / DSM 20650 / CCUG 15529 / CIP 8149 / NCTC 11857 / SLCC 5334 / V8).